The following is a 391-amino-acid chain: Phosphoglycerate kinase (391 aa).

Substrate-binding positions include 21-23 (DLN), R36, 59-62 (HLGR), R113, and R146. Residues K197, E319, and 345-348 (GGDT) contribute to the ATP site.

This sequence belongs to the phosphoglycerate kinase family. Monomer.

It is found in the cytoplasm. The enzyme catalyses (2R)-3-phosphoglycerate + ATP = (2R)-3-phospho-glyceroyl phosphate + ADP. It functions in the pathway carbohydrate degradation; glycolysis; pyruvate from D-glyceraldehyde 3-phosphate: step 2/5. This Shewanella frigidimarina (strain NCIMB 400) protein is Phosphoglycerate kinase.